The following is a 145-amino-acid chain: 3-dehydroquinate dehydratase (145 aa).

Y22 functions as the Proton acceptor in the catalytic mechanism. Substrate-binding residues include N71, H77, and D84. H97 serves as the catalytic Proton donor. Residues 98–99 and R108 each bind substrate; that span reads LS.

The protein belongs to the type-II 3-dehydroquinase family. As to quaternary structure, homododecamer.

It carries out the reaction 3-dehydroquinate = 3-dehydroshikimate + H2O. It functions in the pathway metabolic intermediate biosynthesis; chorismate biosynthesis; chorismate from D-erythrose 4-phosphate and phosphoenolpyruvate: step 3/7. In terms of biological role, catalyzes a trans-dehydration via an enolate intermediate. The chain is 3-dehydroquinate dehydratase from Francisella tularensis subsp. mediasiatica (strain FSC147).